A 248-amino-acid polypeptide reads, in one-letter code: Triosephosphate isomerase (248 aa).

Position 9-11 (9-11) interacts with substrate; it reads NWK. His95 functions as the Electrophile in the catalytic mechanism. Glu166 functions as the Proton acceptor in the catalytic mechanism. Substrate-binding positions include Gly172, Ser210, and 231–232; that span reads GG.

The protein belongs to the triosephosphate isomerase family. In terms of assembly, homodimer.

It is found in the cytoplasm. The enzyme catalyses D-glyceraldehyde 3-phosphate = dihydroxyacetone phosphate. The protein operates within carbohydrate biosynthesis; gluconeogenesis. It functions in the pathway carbohydrate degradation; glycolysis; D-glyceraldehyde 3-phosphate from glycerone phosphate: step 1/1. Its function is as follows. Involved in the gluconeogenesis. Catalyzes stereospecifically the conversion of dihydroxyacetone phosphate (DHAP) to D-glyceraldehyde-3-phosphate (G3P). This is Triosephosphate isomerase from Delftia acidovorans (strain DSM 14801 / SPH-1).